A 207-amino-acid polypeptide reads, in one-letter code: Histidine biosynthesis bifunctional protein HisIE (207 aa).

Residues 1–115 (MLSKKENLLK…FFLKENTLNF (115 aa)) form a phosphoribosyl-AMP cyclohydrolase region. The phosphoribosyl-ATP pyrophosphohydrolase stretch occupies residues 116–207 (LSKLEDLIED…NLKKRKTEKL (92 aa)).

It in the N-terminal section; belongs to the PRA-CH family. The protein in the C-terminal section; belongs to the PRA-PH family.

It is found in the cytoplasm. The enzyme catalyses 1-(5-phospho-beta-D-ribosyl)-ATP + H2O = 1-(5-phospho-beta-D-ribosyl)-5'-AMP + diphosphate + H(+). It carries out the reaction 1-(5-phospho-beta-D-ribosyl)-5'-AMP + H2O = 1-(5-phospho-beta-D-ribosyl)-5-[(5-phospho-beta-D-ribosylamino)methylideneamino]imidazole-4-carboxamide. Its pathway is amino-acid biosynthesis; L-histidine biosynthesis; L-histidine from 5-phospho-alpha-D-ribose 1-diphosphate: step 2/9. The protein operates within amino-acid biosynthesis; L-histidine biosynthesis; L-histidine from 5-phospho-alpha-D-ribose 1-diphosphate: step 3/9. The sequence is that of Histidine biosynthesis bifunctional protein HisIE (hisI) from Buchnera aphidicola subsp. Schizaphis graminum (strain Sg).